The sequence spans 300 residues: NAD kinase (300 aa).

Asp-75 functions as the Proton acceptor in the catalytic mechanism. NAD(+)-binding positions include 75–76, 149–150, Arg-177, Asp-179, 190–195, Ala-214, and Gln-248; these read DG, ND, and TAYALS.

It belongs to the NAD kinase family. A divalent metal cation is required as a cofactor.

The protein localises to the cytoplasm. It catalyses the reaction NAD(+) + ATP = ADP + NADP(+) + H(+). Its function is as follows. Involved in the regulation of the intracellular balance of NAD and NADP, and is a key enzyme in the biosynthesis of NADP. Catalyzes specifically the phosphorylation on 2'-hydroxyl of the adenosine moiety of NAD to yield NADP. This chain is NAD kinase, found in Paraburkholderia phymatum (strain DSM 17167 / CIP 108236 / LMG 21445 / STM815) (Burkholderia phymatum).